A 129-amino-acid polypeptide reads, in one-letter code: Profilin-4 (129 aa).

This sequence belongs to the profilin family. In terms of tissue distribution, expressed in testis, in germ cells in seminiferous tubules (at protein level).

It localises to the cytoplasm. Its function is as follows. Involved in male fertility. Required for manchette development and acrosome biogenesis during spermiogenesis. Binds in vitro to phospholipids, including phosphatidylinositol 3-phosphate (PtdIns(3)P), phosphatidylinositol 4,5-bisphosphate (PtdIns(4,5)P2), phosphatidylinositol 4-phosphate (PtdIns(4)P) and phosphatidic acid (PA). Contrary to other profilin family members, does not bind to actin in vitro. This is Profilin-4 (Pfn4) from Mus musculus (Mouse).